The chain runs to 160 residues: Nucleotide-binding protein Tola_0795 (160 aa).

It belongs to the YajQ family.

Nucleotide-binding protein. In Tolumonas auensis (strain DSM 9187 / NBRC 110442 / TA 4), this protein is Nucleotide-binding protein Tola_0795.